The following is a 242-amino-acid chain: Lysosomal membrane ascorbate-dependent ferrireductase CYB561A3 (242 aa).

Over 1 to 4 the chain is Cytoplasmic; sequence MASG. The chain crosses the membrane as a helical span at residues 5–25; it reads WFYLSCMVLGSLGSMCILFTA. The Cytochrome b561 domain maps to 12 to 219; that stretch reads VLGSLGSMCI…FGLLVLYVLL (208 aa). The Lumenal portion of the chain corresponds to 26 to 40; that stretch reads YWMQYWRGGFAWDGT. The helical transmembrane segment at 41–61 threads the bilayer; that stretch reads VLMFNWHPVLMVAGMVVLYGA. Residues H47 and R67 each coordinate heme b. Residues 62–81 are Cytoplasmic-facing; that stretch reads ASLVYRLPSSWVGPRLPWKV. L-ascorbate-binding residues include R76 and K80. A helical membrane pass occupies residues 82 to 102; the sequence is LHAALHLLAFTCTVVGLIAVF. Heme b-binding positions include H83, 112–115, and H117; that span reads HLYS. Over 103–119 the chain is Lumenal; sequence RFHNHSRIAHLYSLHSW. A helical transmembrane segment spans residues 120 to 140; the sequence is LGITTVVLFACQWFLGFAVFL. The Cytoplasmic segment spans residues 141-154; that stretch reads LPWASQWLRSLLKP. Residue R149 coordinates L-ascorbate. A helical membrane pass occupies residues 155–175; the sequence is LHVFFGACILSLSITSVISGI. H156 and E177 together coordinate heme b. The Lumenal segment spans residues 176–202; it reads NEKLFFVLKNATKPYSSLPGEAVFANS. The helical transmembrane segment at 203–223 threads the bilayer; the sequence is TGLLVVAFGLLVLYVLLASSW. K224 serves as a coordination point for heme b. Residues 224 to 242 are Cytoplasmic-facing; that stretch reads KRPDPGALTDRQPLLHDRE.

In terms of assembly, homodimer. Heme b is required as a cofactor. Post-translationally, N-glycosylated. In terms of tissue distribution, present in lung, spleen, thymus and testis. Present at low level in brain, heart, liver and kidney. Expressed in the alveolar macrophages of the lung, in the white pulp of the spleen, widespread in the thymus, and in the Sertoli cells of the testis (at protein level).

The protein localises to the late endosome membrane. It localises to the lysosome membrane. The catalysed reaction is Fe(3+)(out) + L-ascorbate(in) = monodehydro-L-ascorbate radical(in) + Fe(2+)(out) + H(+). Functionally, transmembrane reductase that uses ascorbate as an electron donor in the cytoplasm and transfers electrons across membranes to reduce iron cations Fe(3+) into Fe(2+) in the lumen of the late endosome and lysosome. Reduced iron can then be extruded from the late endosome and lysosome to the cytoplasm by divalent metal-specific transporters. It is therefore most probably involved in endosomal and lysosomal cellular iron homeostasis. The sequence is that of Lysosomal membrane ascorbate-dependent ferrireductase CYB561A3 from Mus musculus (Mouse).